The sequence spans 487 residues: Steroid 21-hydroxylase (487 aa).

2 residues coordinate heme b: arginine 92 and lysine 117. Residue arginine 228 coordinates 17alpha-hydroxyprogesterone. Arginine 228 is a progesterone binding site. Heme b-binding residues include histidine 357, arginine 418, and cysteine 420.

Belongs to the cytochrome P450 family. Heme b serves as cofactor.

It is found in the endoplasmic reticulum membrane. It localises to the microsome membrane. It catalyses the reaction progesterone + reduced [NADPH--hemoprotein reductase] + O2 = 21-hydroxyprogesterone + oxidized [NADPH--hemoprotein reductase] + H2O + H(+). The enzyme catalyses 17alpha-hydroxyprogesterone + reduced [NADPH--hemoprotein reductase] + O2 = 11-deoxycortisol + oxidized [NADPH--hemoprotein reductase] + H2O + H(+). A cytochrome P450 monooxygenase that plays a major role in adrenal steroidogenesis. Catalyzes the hydroxylation at C-21 of progesterone and 17alpha-hydroxyprogesterone to respectively form 11-deoxycorticosterone and 11-deoxycortisol, intermediate metabolites in the biosynthetic pathway of mineralocorticoids and glucocorticoids. Mechanistically, uses molecular oxygen inserting one oxygen atom into a substrate, and reducing the second into a water molecule, with two electrons provided by NADPH via cytochrome P450 reductase (CPR; NADPH-ferrihemoprotein reductase). This Mus musculus (Mouse) protein is Steroid 21-hydroxylase (Cyp21).